We begin with the raw amino-acid sequence, 118 residues long: Altered inheritance of mitochondria protein 26, mitochondrial (118 aa).

3 consecutive transmembrane segments (helical) span residues 7–27 (EHLL…AYFF), 41–61 (LAVT…SIPA), and 98–118 (FLFC…GLSI).

It localises to the mitochondrion membrane. Functionally, involved in selective mitochondria autophagy (mitophagy). This chain is Altered inheritance of mitochondria protein 26, mitochondrial (AIM26), found in Saccharomyces cerevisiae (strain ATCC 204508 / S288c) (Baker's yeast).